The chain runs to 87 residues: Putative membrane protein insertion efficiency factor (87 aa).

The protein belongs to the UPF0161 family.

It localises to the cell membrane. Could be involved in insertion of integral membrane proteins into the membrane. The protein is Putative membrane protein insertion efficiency factor of Ligilactobacillus salivarius (strain UCC118) (Lactobacillus salivarius).